The primary structure comprises 666 residues: tRNA 5-methylaminomethyl-2-thiouridine biosynthesis bifunctional protein MnmC (666 aa).

Residues 1–245 (MKQYAIQPAT…KREMLCGVME (245 aa)) form a tRNA (mnm(5)s(2)U34)-methyltransferase region. The interval 270-666 (IGGGIASALL…RKLLKGKAVK (397 aa)) is FAD-dependent cmnm(5)s(2)U34 oxidoreductase.

It in the N-terminal section; belongs to the methyltransferase superfamily. tRNA (mnm(5)s(2)U34)-methyltransferase family. This sequence in the C-terminal section; belongs to the DAO family. The cofactor is FAD.

The protein resides in the cytoplasm. The enzyme catalyses 5-aminomethyl-2-thiouridine(34) in tRNA + S-adenosyl-L-methionine = 5-methylaminomethyl-2-thiouridine(34) in tRNA + S-adenosyl-L-homocysteine + H(+). Catalyzes the last two steps in the biosynthesis of 5-methylaminomethyl-2-thiouridine (mnm(5)s(2)U) at the wobble position (U34) in tRNA. Catalyzes the FAD-dependent demodification of cmnm(5)s(2)U34 to nm(5)s(2)U34, followed by the transfer of a methyl group from S-adenosyl-L-methionine to nm(5)s(2)U34, to form mnm(5)s(2)U34. The chain is tRNA 5-methylaminomethyl-2-thiouridine biosynthesis bifunctional protein MnmC from Salmonella paratyphi B (strain ATCC BAA-1250 / SPB7).